The chain runs to 462 residues: Steroidogenic factor 1 (462 aa).

The nuclear receptor DNA-binding region spans 10 to 85 (DELCPVCGDK…VGMRLEAVRA (76 aa)). The segment at 13-33 (CPVCGDKVSGYHYGLLTCESC) adopts an NR C4-type zinc-finger fold. An N6-acetyllysine mark is found at lysine 34, lysine 38, and lysine 72. Residues 49-73 (CTESQSCKIDKTQRKRCPFCRFQKC) form an NR C4-type zinc finger. The segment at 117-149 (GFKLETGPPMGVPPPPPPPPDYMLPPSLHAPEP) is disordered. Lysine 119 is covalently cross-linked (Glycyl lysine isopeptide (Lys-Gly) (interchain with G-Cter in SUMO)). The segment covering 126–139 (MGVPPPPPPPPDYM) has biased composition (pro residues). Lysine 194 participates in a covalent cross-link: Glycyl lysine isopeptide (Lys-Gly) (interchain with G-Cter in SUMO). Serine 203 is modified (phosphoserine; by CDK7). An NR LBD domain is found at 223–460 (NVPELILQLL…NLLIEMLQAK (238 aa)). Positions 342, 437, and 441 each coordinate a 1,2-diacyl-sn-glycero-3-phosphocholine.

Belongs to the nuclear hormone receptor family. NR5 subfamily. Binds DNA as a monomer. Part of a complex consisting of SFPQ, NONO and NR5A1. Interacts with NR0B2, NCOA2 and PPARGC1A. Interacts with DGKQ and CDK7. Binds to and activated by HIPK3. Acetylation stimulates the transcriptional activity. In terms of processing, sumoylation reduces CDK7-mediated phosphorylation on Ser-203. Post-translationally, phosphorylated on Ser-203 by CDK7. This phosphorylation promotes transcriptional activity.

It localises to the nucleus. Its function is as follows. Transcriptional activator. Seems to be essential for sexual differentiation and formation of the primary steroidogenic tissues. Binds to the Ad4 site found in the promoter region of steroidogenic P450 genes such as CYP11A, CYP11B and CYP21B. Also regulates the AMH/Muellerian inhibiting substance gene as well as the AHCH and STAR genes. 5'-YCAAGGYC-3' and 5'-RRAGGTCA-3' are the consensus sequences for the recognition by NR5A1. The SFPQ-NONO-NR5A1 complex binds to the CYP17 promoter and regulates basal and cAMP-dependent transcriptional activity. Binds phosphatidylcholine and phospholipids with a phosphatidylinositol (PI) headgroup, in particular PI(3,4)P2 and PI(3,4,5)P3. Activated by the phosphorylation of NR5A1 by HIPK3 leading to increased steroidogenic gene expression upon cAMP signaling pathway stimulation. The polypeptide is Steroidogenic factor 1 (Nr5a1) (Rattus norvegicus (Rat)).